The primary structure comprises 310 residues: Protein-L-isoaspartate O-methyltransferase (310 aa).

2 disordered regions span residues 1-44 and 67-88; these read MSGE…DKPA and AKPATAPKPTAPKPALPKPAAP. The segment covering 14–29 has biased composition (basic and acidic residues); the sequence is EDLKRAPRKSEGRPGE. The segment covering 32–44 has biased composition (low complexity); that stretch reads AAGAVPKAADKPA. Positions 75 to 86 are enriched in pro residues; sequence PTAPKPALPKPA. The active site involves Ser-157.

Belongs to the methyltransferase superfamily. L-isoaspartyl/D-aspartyl protein methyltransferase family.

Its subcellular location is the cytoplasm. It catalyses the reaction [protein]-L-isoaspartate + S-adenosyl-L-methionine = [protein]-L-isoaspartate alpha-methyl ester + S-adenosyl-L-homocysteine. Functionally, catalyzes the methyl esterification of L-isoaspartyl residues in peptides and proteins that result from spontaneous decomposition of normal L-aspartyl and L-asparaginyl residues. It plays a role in the repair and/or degradation of damaged proteins. The sequence is that of Protein-L-isoaspartate O-methyltransferase from Burkholderia orbicola (strain MC0-3).